Here is a 34-residue protein sequence, read N- to C-terminus: Turripeptide Pal9a (34 aa).

3 cysteine pairs are disulfide-bonded: cysteine 3–cysteine 17, cysteine 8–cysteine 19, and cysteine 13–cysteine 30. Glutamine 34 carries the post-translational modification Glutamine amide.

Expressed by the venom duct.

Its subcellular location is the secreted. The protein is Turripeptide Pal9a of Polystira albida (White giant-turris).